The chain runs to 205 residues: Guanylate kinase (205 aa).

Positions 6 to 185 (GLLIVLSRPS…ACDRIKAIVV (180 aa)) constitute a Guanylate kinase-like domain. Residue 13–20 (RPSGVGKG) participates in ATP binding.

Belongs to the guanylate kinase family.

It is found in the cytoplasm. The catalysed reaction is GMP + ATP = GDP + ADP. Functionally, essential for recycling GMP and indirectly, cGMP. This is Guanylate kinase from Bacillus cereus (strain ATCC 14579 / DSM 31 / CCUG 7414 / JCM 2152 / NBRC 15305 / NCIMB 9373 / NCTC 2599 / NRRL B-3711).